The chain runs to 2617 residues: Non-reducing polyketide synthase epaA (2617 aa).

An N-terminal acylcarrier protein transacylase domain (SAT) region spans residues 95–231 (PNILLSPMVV…AARSISSLQQ (137 aa)). Catalysis depends on Cys-132, which acts as the Nucleophile; for transacylase activity. His-250 (proton donor/acceptor; for transacylase activity) is an active-site residue. Positions 372-790 (PNEIAVIGMS…GSNASMVVAQ (419 aa)) constitute a Ketosynthase family 3 (KS3) domain. Residues Cys-539, His-674, and His-713 each act as for beta-ketoacyl synthase activity in the active site. Residues 902–1193 (FGGQISNYVG…ITSMASRALG (292 aa)) are malonyl-CoA:ACP transacylase (MAT) domain. The N-terminal hotdog fold stretch occupies residues 1282–1413 (PKTLWSLIEA…GKLAFLSGQD (132 aa)). One can recognise a PKS/mFAS DH domain in the interval 1282–1591 (PKTLWSLIEA…YHKVAKASMS (310 aa)). The interval 1310–1589 (LVSGHVIANT…INYHKVAKAS (280 aa)) is product template (PT) domain. Residue His-1314 is the Proton acceptor; for dehydratase activity of the active site. Positions 1443-1591 (ADDIIQGRNI…YHKVAKASMS (149 aa)) are C-terminal hotdog fold. Asp-1499 serves as the catalytic Proton donor; for dehydratase activity. Residues 1600 to 1651 (TEAAPSSSTRAHPTSSSSPRLPGPSVPEDKSQNETQPAGTNAVAKKKSEKSA) are disordered. Low complexity predominate over residues 1602-1619 (AAPSSSTRAHPTSSSSPR). The Carrier domain occupies 1653–1727 (QNVLEKTRAL…GLVEYVQSAV (75 aa)). Ser-1687 is subject to O-(pantetheine 4'-phosphoryl)serine. Residues 1728-1799 (GVPTNGDEPD…PAMPPASSKT (72 aa)) are disordered. The span at 1750-1766 (LAPSPSSSSSSTNLTED) shows a compositional bias: low complexity. Positions 1769-1785 (LDQAETTTNISSYPGQT) are enriched in polar residues. Positions 1970 to 2158 (DSLLNKLSYR…VGYGQVDWTD (189 aa)) are methyltransferase domain. An NADPH-binding (R) domain region spans residues 2240–2485 (ITGATGSLGV…LCWTPVNDVA (246 aa)).

Pantetheine 4'-phosphate serves as cofactor.

Its pathway is secondary metabolite biosynthesis. Its function is as follows. Non-reducing polyketide synthase; part of the gene cluster that mediates the biosynthesis of nigerpyrone and its derivatives carbonarone A and pestalamide A. The biosynthesis pathway begins with the polyketide assembly by epaA to form phenylacetyl triketide precursor from successive condensation of two malonyl-CoA, presumably with one phenylacetyl-CoA starter unit produced by the phenylacetyl-CoA ligase epaB. For the nigerpyrone biosynthesis, the reactive polyketide chain is released as an aldehyde through the R-domain. A nonenzymatic cyclization and dehydration may create nigerpyrone. For the biosynthesis of carbonarone A and pestalamide A, an extra methyl group is added through the C-methyltransferase domain. Several further steps involving the dehydrogenase orf1, the cytochrome P450 monooxygenase orf2 and the FAD-dependent monooxygenase orf3 are required to form a carbonarone A precursor which is converted to carbonarone A via cyclization. The O-acetyltransferase epaC could catalyze the transfer of 2-methylsuccinyl-CoA, a common intermediate in the ethylmalonyl-CoA pathway, to generate the final product pestalamide A. The sequence is that of Non-reducing polyketide synthase epaA from Aspergillus niger (strain ATCC MYA-4892 / CBS 513.88 / FGSC A1513).